The primary structure comprises 269 residues: Cytolethal distending toxin subunit B (269 aa).

The signal sequence occupies residues 1 to 18 (MKKYIISLIVFLSFYAQA). Residues 195–210 (REPADLEMNLTVPVRR) carry the Nuclear localization signal motif.

As to quaternary structure, heterotrimer of 3 subunits, CdtA, CdtB and CdtC.

It is found in the secreted. Part of the tripartite complex that is required for the CDT activity. CdtB exhibits a DNA-nicking endonuclease activity, and very probably causes DNA damage in intoxicated cells. This damage induces G2/M cell cycle arrest, chromatin fragmentation, cell distention and nucleus enlargement. In Escherichia coli, this protein is Cytolethal distending toxin subunit B (cdtB).